We begin with the raw amino-acid sequence, 1024 residues long: Gamma-tubulin complex component 5 (1024 aa).

3 disordered regions span residues isoleucine 153 to glutamine 203, asparagine 523 to glutamine 545, and serine 853 to lysine 873. Positions threonine 189–arginine 198 are enriched in basic and acidic residues. Residues aspartate 529 to serine 543 show a composition bias toward low complexity. Basic and acidic residues predominate over residues serine 853–aspartate 864.

This sequence belongs to the TUBGCP family. In terms of assembly, component of the gamma-tubulin ring complex (gTuRC) consisting of TUBGCP2, TUBGCP3, TUBGCP4, TUBGCP5 and TUBGCP6 and gamma-tubulin TUBG1 or TUBG2. TUBGCP2, TUBGCP3, TUBGCP4, TUBGCP5 and TUBGCP6 assemble in a 5:5:2:1:1 stoichiometry; each is associated with a gamma-tubulin, thereby arranging 14 gamma-tubulins in a helical manner. Gamma-tubulin at the first position is blocked by TUBGCP3 at the last position, allowing 13 protafilaments to grow into a microtubule. The gTuRC (via TUBGCP3 and TUBGCP6) interacts with ACTB and MZT1; the interactions form a luminal bridge that stabilizes the initial structure during complex assembly. The gTuRC (via TUBGCP2) interacts with MZT2A/MZT2B and CDK5RAP2 (via CM1 motif); the interactions play a role in gTuRC activation.

The protein resides in the cytoplasm. It localises to the cytoskeleton. It is found in the microtubule organizing center. Its subcellular location is the centrosome. Component of the gamma-tubulin ring complex (gTuRC) which mediates microtubule nucleation. The gTuRC regulates the minus-end nucleation of alpha-beta tubulin heterodimers that grow into microtubule protafilaments, a critical step in centrosome duplication and spindle formation. In Mus musculus (Mouse), this protein is Gamma-tubulin complex component 5 (Tubgcp5).